Consider the following 139-residue polypeptide: Histone H2B.11 (139 aa).

Over residues 1–39 (MAPKAEKKPAEKKPVEEKAEKKPKAEKRVPGAKEGGGEK) the composition is skewed to basic and acidic residues. Residues 1-47 (MAPKAEKKPAEKKPVEEKAEKKPKAEKRVPGAKEGGGEKKGKKKAKK) are disordered. 2 positions are modified to N6-acetyllysine: lysine 7 and lysine 27. Residue lysine 135 forms a Glycyl lysine isopeptide (Lys-Gly) (interchain with G-Cter in ubiquitin) linkage.

This sequence belongs to the histone H2B family. As to quaternary structure, the nucleosome is a histone octamer containing two molecules each of H2A, H2B, H3 and H4 assembled in one H3-H4 heterotetramer and two H2A-H2B heterodimers. The octamer wraps approximately 147 bp of DNA. Post-translationally, can be acetylated to form H2BK6ac and H2BK33ac. Monoubiquitinated by BRE1 to form H2BK143ub1 and deubiquitinated by UBP26. Required for heterochromatic histone H3 di- and trimethylation at H3K4me. May give a specific tag for epigenetic transcriptional activation.

The protein localises to the nucleus. Its subcellular location is the chromosome. Functionally, core component of nucleosome. Nucleosomes wrap and compact DNA into chromatin, limiting DNA accessibility to the cellular machineries which require DNA as a template. Histones thereby play a central role in transcription regulation, DNA repair, DNA replication and chromosomal stability. DNA accessibility is regulated via a complex set of post-translational modifications of histones, also called histone code, and nucleosome remodeling. The protein is Histone H2B.11 (H2B.11) of Oryza sativa subsp. indica (Rice).